We begin with the raw amino-acid sequence, 710 residues long: MWLSLPRSGYGSVATLTSKRVLACLTPLRQFSTSPAVSNANHKNVDNINKSPANDAANNAVEKGDKPTTSPEKLATKAEKSSANSVKAAANALGESNLSNSEQRRLDWIIMKDMLKYIWPKGKTSVKFRVLVAVALLVGAKLLNVQVPFFFKEIIDDMNIEWNSATALGVGITALIFSYGAARFGAVLFGELRNAIFASVAQKAIKEVATNVFRHLLKLDMAFHLSRQTGGITRAIDRGTKGISFVLSSMVFHIIPIALEISLVCGILSYNFGWKYALVTGATMVSYAIFTITTTSWRTKFRRNANRADNEASNVCLDSLINIEAVKSFGNEGYMVDKYQSALTKYEKASIKIATSLAFLNSGQNLIFSSALTAMMYMTCCGVADGSLTVGDLVLVNQLVFQLSVPLNFLGSVYRDLRQSLLDMGSLFSLQKVAGQIQESPNAKPLQLTNGEIRFENVTYGYHPDRPILKNASFVIPGGLKTAIVGPSGSGKSTILKLAFRFYDTQEGRILIDGQDVREVTLASLRSAIGVVPQDTPLFNDSIMNNIRFGRLEADDKEVENAACAAKLDALVRQLPDGWNTNVGERGMMISGGEKQRLAVARVLLKNSPVVFLDEATSALDTNTERQLLANMDQVLGDKTCVAIAHRLRTVADSDKIICLNQGGVEEEGTQAELLLKDGLYKSMWDAQEQVELGEEGIKEAEEKAAKKDV.

The transit peptide at 1–38 (MWLSLPRSGYGSVATLTSKRVLACLTPLRQFSTSPAVS) directs the protein to the mitochondrion. Positions 35 to 52 (PAVSNANHKNVDNINKSP) are enriched in polar residues. Positions 35–83 (PAVSNANHKNVDNINKSPANDAANNAVEKGDKPTTSPEKLATKAEKSSA) are disordered. Over 39-129 (NANHKNVDNI…PKGKTSVKFR (91 aa)) the chain is Mitochondrial matrix. The chain crosses the membrane as a helical span at residues 130-151 (VLVAVALLVGAKLLNVQVPFFF). One can recognise an ABC transmembrane type-1 domain in the interval 130 to 419 (VLVAVALLVG…LGSVYRDLRQ (290 aa)). Over 152 to 173 (KEIIDDMNIEWNSATALGVGIT) the chain is Mitochondrial intermembrane. A helical membrane pass occupies residues 174-197 (ALIFSYGAARFGAVLFGELRNAIF). Topologically, residues 198-246 (ASVAQKAIKEVATNVFRHLLKLDMAFHLSRQTGGITRAIDRGTKGISFV) are mitochondrial matrix. A helical transmembrane segment spans residues 247–270 (LSSMVFHIIPIALEISLVCGILSY). Asn271 is a topological domain (mitochondrial intermembrane). The chain crosses the membrane as a helical span at residues 272–292 (FGWKYALVTGATMVSYAIFTI). The Mitochondrial matrix portion of the chain corresponds to 293–358 (TTTSWRTKFR…ASIKIATSLA (66 aa)). Glutathione contacts are provided by residues 298 to 302 (RTKFR) and 361 to 364 (NSGQ). Residues 359–377 (FLNSGQNLIFSSALTAMMY) form a helical membrane-spanning segment. Over 378-392 (MTCCGVADGSLTVGD) the chain is Mitochondrial intermembrane. Residues 393-414 (LVLVNQLVFQLSVPLNFLGSVY) traverse the membrane as a helical segment. Gly411 is a glutathione binding site. The Mitochondrial matrix segment spans residues 415–710 (RDLRQSLLDM…AEEKAAKKDV (296 aa)). The ABC transporter domain occupies 453–687 (IRFENVTYGY…DGLYKSMWDA (235 aa)). Residues Tyr462 and 486 to 497 (GPSGSGKSTILK) contribute to the ATP site.

The protein belongs to the ABC transporter superfamily. ABCB family. Heavy Metal importer (TC 3.A.1.210) subfamily. Homodimer.

It is found in the mitochondrion inner membrane. Functionally, performs an essential function in the generation of cytoplasmic iron-sulfur proteins by mediating the ATP-dependent export of Fe/S cluster precursors synthesized by NFS1 and other mitochondrial proteins. Hydrolyzes ATP. Binds glutathione and may function by transporting a glutathione-conjugated iron-sulfur compound. The chain is Iron-sulfur clusters transporter ATM1, mitochondrial from Yarrowia lipolytica (strain CLIB 122 / E 150) (Yeast).